A 410-amino-acid chain; its full sequence is 26S proteasome non-ATPase regulatory subunit 6 (410 aa).

Positions 207–382 (DFAGAADLFL…GVIEVNHRDS (176 aa)) constitute a PCI domain.

The protein belongs to the proteasome subunit S10 family. As to expression, expressed in multiple tissues including the intestine, pharynx and hypodermis.

Acts as a regulatory subunit of the 26S proteasome which is involved in the ATP-dependent degradation of ubiquitinated proteins. The chain is 26S proteasome non-ATPase regulatory subunit 6 (rpn-7) from Caenorhabditis elegans.